We begin with the raw amino-acid sequence, 483 residues long: Spore germination protein B1 (483 aa).

5 helical membrane passes run 289 to 309 (ILITIYLPGLYISLVSFHTGL), 323 to 343 (LNVPFPPFVEAFIMIFTIELI), 353 to 373 (PIGQTIGLIGGVVIGQAAVQA), 375 to 395 (IVSALMVIVVSVTALASFTVP), and 410 to 430 (VMISATALGMYGVIMVYLFVI).

The protein belongs to the GerABKA family.

The protein resides in the cell membrane. Functionally, involved in the response to the germinative mixture of L-asparagine, glucose, fructose and potassium ions (AGFK). Cannot stimulate germination in the absence of gerD and gerK gene products (fructose and glucose receptors respectively). The polypeptide is Spore germination protein B1 (gerBA) (Bacillus subtilis (strain 168)).